Consider the following 203-residue polypeptide: Peptide deformylase (203 aa).

2 residues coordinate Fe cation: Cys-121 and His-163. Residue Glu-164 is part of the active site. A Fe cation-binding site is contributed by His-167.

This sequence belongs to the polypeptide deformylase family. It depends on Fe(2+) as a cofactor.

It catalyses the reaction N-terminal N-formyl-L-methionyl-[peptide] + H2O = N-terminal L-methionyl-[peptide] + formate. In terms of biological role, removes the formyl group from the N-terminal Met of newly synthesized proteins. Requires at least a dipeptide for an efficient rate of reaction. N-terminal L-methionine is a prerequisite for activity but the enzyme has broad specificity at other positions. This chain is Peptide deformylase, found in Prochlorococcus marinus (strain MIT 9515).